Here is a 304-residue protein sequence, read N- to C-terminus: MLMTEDRLTHLKQLEAESIHIIREVAAEFENPVMLYSIGKDSAVMLHLALKAFYPAKLPFPLLHVDTGWKFKDMIAFRDNMAKTHGFDLIVHQNKEGREAGINPFDHGSSKYTDIMKTQGLKQALDKYQFDAAFGGARRDEEKSRAKERVYSFRDTKHRWDPKNQRPELWSLYNGKVNKGESIRVFPLSNWTELDIWQYIYLENIQIVPLYFSAVRPVVERSGTLIMVDDERMRLKEGEVPQMKSVRFRTLGCYPLTGAVESEADTLPEIIQEMLLATSSERQGRMIDHDEAGSMEKKKQEGYF.

It belongs to the PAPS reductase family. CysD subfamily. Heterodimer composed of CysD, the smaller subunit, and CysN.

The enzyme catalyses sulfate + ATP + H(+) = adenosine 5'-phosphosulfate + diphosphate. Its pathway is sulfur metabolism; hydrogen sulfide biosynthesis; sulfite from sulfate: step 1/3. With CysN forms the ATP sulfurylase (ATPS) that catalyzes the adenylation of sulfate producing adenosine 5'-phosphosulfate (APS) and diphosphate, the first enzymatic step in sulfur assimilation pathway. APS synthesis involves the formation of a high-energy phosphoric-sulfuric acid anhydride bond driven by GTP hydrolysis by CysN coupled to ATP hydrolysis by CysD. This is Sulfate adenylyltransferase subunit 2 from Acinetobacter baylyi (strain ATCC 33305 / BD413 / ADP1).